Consider the following 112-residue polypeptide: Citrate synthase (112 aa).

Active-site residues include histidine 39 and aspartate 97.

The protein belongs to the citrate synthase family.

It carries out the reaction oxaloacetate + acetyl-CoA + H2O = citrate + CoA + H(+). The protein operates within carbohydrate metabolism; tricarboxylic acid cycle; isocitrate from oxaloacetate: step 1/2. In Bartonella vinsonii subsp. berkhoffii, this protein is Citrate synthase (gltA).